The following is a 598-amino-acid chain: Arginine--tRNA ligase (598 aa).

The short motif at Ala135 to Gly145 is the 'HIGH' region element. Residues Val229–Arg248 form a disordered region. Positions Gly231 to Arg248 are enriched in basic and acidic residues.

Belongs to the class-I aminoacyl-tRNA synthetase family. In terms of assembly, monomer.

Its subcellular location is the cytoplasm. The catalysed reaction is tRNA(Arg) + L-arginine + ATP = L-arginyl-tRNA(Arg) + AMP + diphosphate. In Bifidobacterium animalis subsp. lactis (strain AD011), this protein is Arginine--tRNA ligase.